Here is a 141-residue protein sequence, read N- to C-terminus: MAIERTLSIIKPDAVAKNVIGQIYARFEGAGLKVVAAKMIHLSRAEAEQFYAVHKERPFFKDLVDFMISGPVMVQALEGESAIVKNRDLMGATDPKKAEKGTIRADFADSIDANAVHGSDAAETAAVEVAFFFPGLNIYSR.

ATP is bound by residues K11, F59, R87, T93, R104, and N114. Residue H117 is the Pros-phosphohistidine intermediate of the active site.

It belongs to the NDK family. As to quaternary structure, homotetramer. Mg(2+) serves as cofactor.

Its subcellular location is the cytoplasm. It carries out the reaction a 2'-deoxyribonucleoside 5'-diphosphate + ATP = a 2'-deoxyribonucleoside 5'-triphosphate + ADP. It catalyses the reaction a ribonucleoside 5'-diphosphate + ATP = a ribonucleoside 5'-triphosphate + ADP. Major role in the synthesis of nucleoside triphosphates other than ATP. The ATP gamma phosphate is transferred to the NDP beta phosphate via a ping-pong mechanism, using a phosphorylated active-site intermediate. The protein is Nucleoside diphosphate kinase of Ralstonia nicotianae (strain ATCC BAA-1114 / GMI1000) (Ralstonia solanacearum).